A 207-amino-acid chain; its full sequence is MTMDGDSSTTDASQLGISADYIGGSHYVIQPHDDTEDSMNDHEDTNGSKESFREQDIYLPIANVARIMKNAIPQTGKIAKDAKECVQECVSEFISFITSEASERCHQEKRKTINGEDILFAMSTLGFDSYVEPLKLYLQKFREAMKGEKGIGGAVTATDGLSEELAEEAFTNQLPAGLITADGQQQNVMVYTTSYHQISGVQQIQFS.

Positions 1 to 52 (MTMDGDSSTTDASQLGISADYIGGSHYVIQPHDDTEDSMNDHEDTNGSKESF) are a domain. Positions 27–52 (YVIQPHDDTEDSMNDHEDTNGSKESF) are disordered. Basic and acidic residues predominate over residues 39–52 (MNDHEDTNGSKESF). Positions 53–142 (REQDIYLPIA…PLKLYLQKFR (90 aa)) are b domain. Residues 59-65 (LPIANVA) mediate DNA binding. Residues 86–97 (VQECVSEFISFI) form a subunit association domain (SAD) region. Residue K140 forms a Glycyl lysine isopeptide (Lys-Gly) (interchain with G-Cter in ubiquitin) linkage. A c domain region spans residues 143–207 (EAMKGEKGIG…ISGVQQIQFS (65 aa)).

The protein belongs to the NFYB/HAP3 subunit family. Heterotrimeric transcription factor composed of three components, NF-YA, NF-YB and NF-YC. NF-YB and NF-YC must interact and dimerize for NF-YA association and DNA binding. Interacts with C1QBP. In terms of processing, monoubiquitination at Lys-140 plays an important role in transcriptional activation by allowing the deposition of histone H3 methylations as well as histone H2B monoubiquitination at 'Lys-121'.

The protein resides in the nucleus. Functionally, component of the sequence-specific heterotrimeric transcription factor (NF-Y) which specifically recognizes a 5'-CCAAT-3' box motif found in the promoters of its target genes. NF-Y can function as both an activator and a repressor, depending on its interacting cofactors. The sequence is that of Nuclear transcription factor Y subunit beta (NFYB) from Equus caballus (Horse).